The sequence spans 384 residues: Urea transporter 1 (384 aa).

The next 5 membrane-spanning stretches (helical) occupy residues 61–81, 85–105, 111–131, 138–158, and 168–188; these read ISQVVFVSNPISGILILAGLL, PWWALCGCVGTVVSTLTALLL, AIAAGLQGYNATLVGILMAVF, FWWLIFPVSAMSMTCPVFSSA, and LPVFTLPFNMALSLYLSATGH. A glycan (N-linked (GlcNAc...) asparagine) is linked at asparagine 206. 4 helical membrane-spanning segments follow: residues 250-270, 279-299, 305-325, and 327-347; these read LMCLHAAIGSLLGVIAGLSLA, GLWGFNSSLACIAIGGMFMAL, LLALACALFTAYFGACMTHLM, and AVHLPACTWSFCLATLLFLLL.

This sequence belongs to the urea transporter family. In terms of assembly, homotrimer; each subunit contains a pore through which urea permeates. Identified in a complex with STOM. In terms of tissue distribution, expressed in brain, spleen, kidney, testis and lung, with highest levels in brain.

It is found in the cell membrane. Its subcellular location is the basolateral cell membrane. It carries out the reaction urea(in) = urea(out). Its function is as follows. Mediates the transport of urea driven by a concentration gradient across the cell membrane. Mediates the transport of urea across the cell membranes of erythrocytes and the renal inner medullary collecting duct which is critical to the urinary concentrating mechanism. Facilitates water transport in erythrocytes. This chain is Urea transporter 1 (Slc14a1), found in Rattus norvegicus (Rat).